Consider the following 77-residue polypeptide: MARVCQVTGKAPMVGNNVSHANNKTKRRFLPNLQNRRFWVESENRWVSLRVSNAGLRLIDKKGIDEVLADLRARGEV.

This sequence belongs to the bacterial ribosomal protein bL28 family.

In Ralstonia nicotianae (strain ATCC BAA-1114 / GMI1000) (Ralstonia solanacearum), this protein is Large ribosomal subunit protein bL28.